A 989-amino-acid polypeptide reads, in one-letter code: ATP-dependent 6-phosphofructokinase subunit alpha (989 aa).

The tract at residues 1–585 (MPEPSISALS…SYESFLSVSK (585 aa)) is N-terminal catalytic PFK domain 1. ATP is bound by residues Gly-220, 283-284 (RS), and 313-316 (GDGS). Asp-314 serves as a coordination point for Mg(2+). Residues 359-361 (SID), Arg-396, 403-405 (MGR), Glu-460, Arg-487, and 493-496 (HVQR) contribute to the beta-D-fructose 6-phosphate site. Asp-361 (proton acceptor) is an active-site residue. Positions 586 to 599 (YDDGSYLVPESSRL) are interdomain linker. Positions 600-989 (NIAIIHVGAP…LSGRLSIRTT (390 aa)) are C-terminal regulatory PFK domain 2. Residues Arg-670, 727 to 731 (TVSNN), Arg-765, 772 to 774 (QGG), Glu-832, Arg-858, 864 to 867 (HVQQ), and Arg-963 contribute to the beta-D-fructose 2,6-bisphosphate site.

Belongs to the phosphofructokinase type A (PFKA) family. ATP-dependent PFK group I subfamily. Eukaryotic two domain clade 'E' sub-subfamily. In terms of assembly, heterododecamer of 4 alpha, 4 beta and 4 gamma chains. The gamma chain bridges the N-terminal halves of the alpha and beta subunits. It depends on Mg(2+) as a cofactor.

It localises to the cytoplasm. It catalyses the reaction beta-D-fructose 6-phosphate + ATP = beta-D-fructose 1,6-bisphosphate + ADP + H(+). It functions in the pathway carbohydrate degradation; glycolysis; D-glyceraldehyde 3-phosphate and glycerone phosphate from D-glucose: step 3/4. Its activity is regulated as follows. Allosterically activated by ADP, AMP, or fructose 2,6-bisphosphate, and allosterically inhibited by ATP or citrate. Functionally, catalyzes the phosphorylation of D-fructose 6-phosphate to fructose 1,6-bisphosphate by ATP, the first committing step of glycolysis. Involved in the modulation of glucose-induced microautophagy of peroxisomes independent of its ability to metabolize glucose intermediates. The polypeptide is ATP-dependent 6-phosphofructokinase subunit alpha (PFK1) (Komagataella phaffii (strain GS115 / ATCC 20864) (Yeast)).